The following is a 302-amino-acid chain: Putative gluconeogenesis factor (302 aa).

Belongs to the gluconeogenesis factor family.

The protein localises to the cytoplasm. Required for morphogenesis under gluconeogenic growth conditions. This chain is Putative gluconeogenesis factor (ybhK), found in Escherichia coli O157:H7.